The following is a 668-amino-acid chain: DNA ligase (668 aa).

Residues 34–38 (DTEYD), 83–84 (SL), and Glu114 contribute to the NAD(+) site. Residue Lys116 is the N6-AMP-lysine intermediate of the active site. The NAD(+) site is built by Arg137, Glu171, Lys286, and Lys310. Positions 404, 407, 422, and 427 each coordinate Zn(2+). The region spanning 588–668 (NSDSIIANKT…FFDLLKSEKG (81 aa)) is the BRCT domain.

It belongs to the NAD-dependent DNA ligase family. LigA subfamily. Requires Mg(2+) as cofactor. Mn(2+) is required as a cofactor.

The catalysed reaction is NAD(+) + (deoxyribonucleotide)n-3'-hydroxyl + 5'-phospho-(deoxyribonucleotide)m = (deoxyribonucleotide)n+m + AMP + beta-nicotinamide D-nucleotide.. In terms of biological role, DNA ligase that catalyzes the formation of phosphodiester linkages between 5'-phosphoryl and 3'-hydroxyl groups in double-stranded DNA using NAD as a coenzyme and as the energy source for the reaction. It is essential for DNA replication and repair of damaged DNA. This Mycoplasma capricolum subsp. capricolum (strain California kid / ATCC 27343 / NCTC 10154) protein is DNA ligase.